The following is a 329-amino-acid chain: 4-hydroxythreonine-4-phosphate dehydrogenase (329 aa).

Residues His-136 and Thr-137 each contribute to the substrate site. 3 residues coordinate a divalent metal cation: His-166, His-211, and His-266. 3 residues coordinate substrate: Lys-274, Asn-283, and Arg-292.

This sequence belongs to the PdxA family. In terms of assembly, homodimer. Zn(2+) serves as cofactor. Requires Mg(2+) as cofactor. It depends on Co(2+) as a cofactor.

The protein localises to the cytoplasm. The enzyme catalyses 4-(phosphooxy)-L-threonine + NAD(+) = 3-amino-2-oxopropyl phosphate + CO2 + NADH. It functions in the pathway cofactor biosynthesis; pyridoxine 5'-phosphate biosynthesis; pyridoxine 5'-phosphate from D-erythrose 4-phosphate: step 4/5. Catalyzes the NAD(P)-dependent oxidation of 4-(phosphooxy)-L-threonine (HTP) into 2-amino-3-oxo-4-(phosphooxy)butyric acid which spontaneously decarboxylates to form 3-amino-2-oxopropyl phosphate (AHAP). The protein is 4-hydroxythreonine-4-phosphate dehydrogenase of Escherichia coli O17:K52:H18 (strain UMN026 / ExPEC).